Reading from the N-terminus, the 456-residue chain is uncharacterized protein (456 aa).

This sequence belongs to the herpesviridae UL49 family.

This is an uncharacterized protein from Equus caballus (Horse).